A 192-amino-acid polypeptide reads, in one-letter code: uncharacterized protein (192 aa).

The Nudix hydrolase domain maps to glutamine 29–serine 160. Residues glycine 67–alanine 89 carry the Nudix box motif. The Mg(2+) site is built by glutamate 83 and glutamate 87.

It belongs to the Nudix hydrolase family. PCD1 subfamily. The cofactor is Mn(2+). Mg(2+) is required as a cofactor.

In terms of biological role, probably mediates the hydrolysis of some nucleoside diphosphate derivatives. This is an uncharacterized protein from Salmonella newport (strain SL254).